A 312-amino-acid polypeptide reads, in one-letter code: tRNA-cytidine(32) 2-sulfurtransferase (312 aa).

Positions 47–52 (SGGKDS) match the PP-loop motif motif. C122, C125, and C213 together coordinate [4Fe-4S] cluster.

The protein belongs to the TtcA family. Homodimer. It depends on Mg(2+) as a cofactor. Requires [4Fe-4S] cluster as cofactor.

The protein resides in the cytoplasm. It carries out the reaction cytidine(32) in tRNA + S-sulfanyl-L-cysteinyl-[cysteine desulfurase] + AH2 + ATP = 2-thiocytidine(32) in tRNA + L-cysteinyl-[cysteine desulfurase] + A + AMP + diphosphate + H(+). It participates in tRNA modification. In terms of biological role, catalyzes the ATP-dependent 2-thiolation of cytidine in position 32 of tRNA, to form 2-thiocytidine (s(2)C32). The sulfur atoms are provided by the cysteine/cysteine desulfurase (IscS) system. The chain is tRNA-cytidine(32) 2-sulfurtransferase from Shewanella frigidimarina (strain NCIMB 400).